The sequence spans 99 residues: NADH-quinone oxidoreductase subunit K (99 aa).

The next 3 helical transmembrane spans lie at 3–23 (ILFS…GILI), 28–48 (LIVF…FVAF), and 59–79 (IWVF…LAII).

This sequence belongs to the complex I subunit 4L family. NDH-1 is composed of 14 different subunits. Subunits NuoA, H, J, K, L, M, N constitute the membrane sector of the complex.

The protein localises to the cell inner membrane. It catalyses the reaction a quinone + NADH + 5 H(+)(in) = a quinol + NAD(+) + 4 H(+)(out). Its function is as follows. NDH-1 shuttles electrons from NADH, via FMN and iron-sulfur (Fe-S) centers, to quinones in the respiratory chain. The immediate electron acceptor for the enzyme in this species is believed to be ubiquinone. Couples the redox reaction to proton translocation (for every two electrons transferred, four hydrogen ions are translocated across the cytoplasmic membrane), and thus conserves the redox energy in a proton gradient. This is NADH-quinone oxidoreductase subunit K from Protochlamydia amoebophila (strain UWE25).